Reading from the N-terminus, the 116-residue chain is Ig heavy chain V-A1 region BS-5 (116 aa).

A Pyrrolidone carboxylic acid modification is found at Gln1. One can recognise an Ig-like domain in the interval 1–107; it reads QSVEESGGRL…LVHLAFVDVW (107 aa).

This Oryctolagus cuniculus (Rabbit) protein is Ig heavy chain V-A1 region BS-5.